Here is a 250-residue protein sequence, read N- to C-terminus: Testis-expressed protein 101 (250 aa).

The first 25 residues, 1-25 (MGACRIQYVLLIFLLIASRWTLVQN), serve as a signal peptide directing secretion. Residues N45, N110, N134, and N160 are each glycosylated (N-linked (GlcNAc...) asparagine). Residues 141-215 (CPTCVALGSC…VKETCSYQSF (75 aa)) enclose the UPAR/Ly6 domain. G224 carries the GPI-anchor amidated glycine lipid modification. Residues 225–250 (ASQMPTSLWVLELLFPLLLLPLTHFP) constitute a propeptide, removed in mature form.

In terms of assembly, interacts with VAMP3. Interacts with LY6K. Interacts with DPEP3; co-localized on the cell surface of spermatocytes, spermatids, and testicular spermatozoa, co-localized only in cytoplasmic droplets of caput and corpus epididymal sperm. Interacts with ADAM3; co-localized on sperm surface. Interacts with ADAM5. N-glycosylated; by high mannose and/or biantennary complex and/or certain types of hybrid oligosaccharides; possesses different oligosaccharides chains according to its subcellular localization in the testis. In terms of processing, sheds from membrane raft by ACE and released from the cell surface of epididymal sperm while it passes through the caput epididymis leading to disappearance of TEX101 on spermatozoa; is essential to produce fertile spermatozoa. Detected in testis and ovary. Expressed in spermatocytes, spermatids and testicular spermatozoa, but not in spermatogonia or interstitial cells. Expressed abundantly in testicular germ cells (TGCs) but mostly disappeared from epididymal spermatozoa.

The protein localises to the cell membrane. It is found in the membrane raft. Its subcellular location is the cytoplasmic vesicle. It localises to the secretory vesicle. The protein resides in the acrosome. The protein localises to the secreted. In terms of biological role, plays a role in fertilization by controlling binding of sperm to zona pellucida and migration of spermatozoa into the oviduct probably through molecule adhesion ADAM3. May play a role in signal transduction and promote protein tyrosine phosphorylation. In Mus musculus (Mouse), this protein is Testis-expressed protein 101.